Here is a 371-residue protein sequence, read N- to C-terminus: Phospholipid-transporting ATPase accessory subunit ivn1 (371 aa).

The Cytoplasmic segment spans residues 1 to 39 (MSQTEIVKKPKHKRFKRPDKSRFVQQTLPAWQFIFTPWT). A helical transmembrane segment spans residues 40 to 60 (VLPLLFLLGIVFAPLGAGMFV). Topologically, residues 61–325 (ASRRVKELRI…STTSVIGGKN (265 aa)) are extracellular. 2 disulfides stabilise this stretch: Cys-75–Cys-111 and Cys-166–Cys-181. Asn-99 carries N-linked (GlcNAc...) asparagine glycosylation. Asn-190, Asn-212, Asn-216, Asn-233, Asn-284, and Asn-297 each carry an N-linked (GlcNAc...) asparagine glycan. A helical membrane pass occupies residues 326–346 (YFLGILYFVIGGLCAASGVIL). Residues 347 to 371 (SIACLIKPRRVGDPRYLSWNRGKSS) are Cytoplasmic-facing.

This sequence belongs to the CDC50/LEM3 family.

Its subcellular location is the endoplasmic reticulum membrane. Functionally, accessory component of a P4-ATPase flippase complex which catalyzes the hydrolysis of ATP coupled to the transport of aminophospholipids from the lumenal to the cytosolic leaflet of membranes and ensures the maintenance of asymmetric distribution of phospholipids. This chain is Phospholipid-transporting ATPase accessory subunit ivn1 (ivn1), found in Schizosaccharomyces pombe (strain 972 / ATCC 24843) (Fission yeast).